Here is a 2114-residue protein sequence, read N- to C-terminus: Protein CELLULOSE SYNTHASE INTERACTIVE 2 (2114 aa).

ARM repeat units follow at residues 2 to 42 (TSEM…LLGL), 46 to 87 (KKEC…VLCK), 89 to 128 (KNVR…EVSL), 135 to 177 (NVGT…NLCG), 180 to 219 (DGFW…RLIR), 222 to 262 (TSSI…AITS), 265 to 305 (EEAI…SYGT), 354 to 394 (GDTR…SLFG), 396 to 435 (VDLS…NLCK), 479 to 519 (EESR…NLCC), 522 to 561 (EEIR…KLIK), 563 to 595 (ADPS…HVLA), 601 to 640 (EFVT…DLFS), 643 to 682 (KDLC…SLSN), 708 to 750 (AKTN…RVLR), 774 to 816 (SDVF…LLAK), 825 to 865 (HNPF…RFCK), 870 to 910 (LLGR…CAAK), 914 to 953 (TLWA…IQRP), 994 to 1033 (PSNR…KWIA), 1044 to 1083 (PKVV…ALVR), 1087 to 1128 (DKTI…LVQN), 1141 to 1182 (ERVR…RIAD), 1185 to 1225 (DLSK…SLFR), 1227 to 1264 (PEIT…LCEL), 1265 to 1304 (FSSE…ALVK), 1312 to 1353 (RPDI…FLFT), 1355 to 1394 (EGLR…RLLD), 1396 to 1435 (KRFV…KMAK), 1454 to 1494 (ISQL…MVQP), 1496 to 1525 (LLIL…KPMV), 1526 to 1564 (LESL…SLLE), 1566 to 1605 (QRFQ…RSSV), 1606 to 1648 (TWPK…NILR), 1650 to 1689 (NPEH…ENQD), 1690 to 1730 (SSSV…RNPK), 1732 to 1771 (RETK…DISQ), 1772 to 1813 (HEGL…NFAM), 1816 to 1855 (RTSR…SLFS), 1857 to 1898 (HTLQ…TILT), 1901 to 1940 (PKLR…TLRQ), and 1949 to 1993 (TARS…CLPG). The C2 domain maps to 1974-2087 (SPAPSSFHER…LSEGSYSGIF (114 aa)).

Associates with cellulase synthase (CESA) complexes. Binds to cortical microtubules.

It localises to the cell membrane. The protein resides in the cytoplasm. The protein localises to the cytoskeleton. Functionally, regulator of the microtubular cytoskeleton. Microtubule-associated protein involved in the association of cellulase synthase (CESA) complexes (CSCs) and cortical microtubules. Promotes dynamics of CSCs in the plasma membrane. Regulates primary cell wall biosynthesis and cellulose microfibrils organization. This is Protein CELLULOSE SYNTHASE INTERACTIVE 2 from Arabidopsis thaliana (Mouse-ear cress).